Here is a 412-residue protein sequence, read N- to C-terminus: G-protein coupled receptor homolog UL33 (412 aa).

The Virion surface segment spans residues 1 to 35 (MDTIIHNTTNRSTDTPHVNITCNITEPLSAIRTTE). 3 N-linked (GlcNAc...) asparagine; by host glycosylation sites follow: Asn-7, Asn-19, and Asn-23. A helical membrane pass occupies residues 36–56 (AVINTFIIFVGGPLNAIVLIT). The Intravirion segment spans residues 57-80 (QLLTNRVLGYSTPTIYMTNLYSTN). Residues 81-101 (FLTLTVLPFIVLSNQWLLPAS) form a helical membrane-spanning segment. The Virion surface segment spans residues 102 to 106 (VASCK). A disulfide bridge links Cys-105 with Cys-188. Residues 107 to 127 (FLSVIYYSSCTVGFATVALIA) traverse the membrane as a helical segment. The Intravirion portion of the chain corresponds to 128–147 (ADRYRVLHKRTYARQSYRST). Residues 148–168 (YIILLLTWFAGLIFSMPAAVY) form a helical membrane-spanning segment. The Virion surface portion of the chain corresponds to 169-206 (TTVVIHNGTNGQSSNGHATCVLYFIADEVYTVLLSWKV). The helical transmembrane segment at 207-227 (LLTLVWGAAPVIMMTWFYAFF) threads the bilayer. Residues 228–244 (YSTVQRASQKQRSRTLT) lie on the Intravirion side of the membrane. A helical transmembrane segment spans residues 245–265 (FVSVLLISFVALQTPYVSIMI). The Virion surface segment spans residues 266–292 (FNSYATAAWPMDCEHLTLRRTIGTLSR). The helical transmembrane segment at 293-313 (LVPHLHCLINPILYALLGHDF) threads the bilayer. At 314–412 (LQRMRQCFRG…SQSHHNLSGV (99 aa)) the chain is on the intravirion side. The disordered stretch occupies residues 377 to 412 (NFPSGTWKGGQKTASNDTSTKIPHRLSQSHHNLSGV). Residues 388 to 397 (KTASNDTSTK) show a composition bias toward polar residues.

The protein belongs to the G-protein coupled receptor 1 family. As to quaternary structure, heterodimerizes with US28.

Its subcellular location is the virion. It is found in the host cell membrane. It localises to the host cytoplasm. In terms of biological role, G-protein-coupled receptor (vGPCR) that constitutively activates multiple oncogenic signaling pathways including STAT3, AP-1, phospholipase C, NF-kappa-B or cAMP-responsive element (CRE) pathways. Plays an important role in viral reactivation from latency through activation of host CREB1, facilitating its recruitment to the viral major immediate early (MIE) genes. In turn, expression of the MIE-driven genes such as UL123 are de-repressed. Also facilitates virus dissemination via the extracellular and cell-to-cell route. The sequence is that of G-protein coupled receptor homolog UL33 (UL33) from Human cytomegalovirus (strain Merlin) (HHV-5).